We begin with the raw amino-acid sequence, 509 residues long: Photosystem II CP47 reaction center protein (509 aa).

Helical transmembrane passes span 21-36 (SVHLMHTALVAGWAGS), 101-115 (IVLSGLLFLAAVWHW), 140-156 (GIHLFLSGLLCFGFGAF), 203-218 (IAAGIVGIIAGLFHLT), 237-252 (VLSSSIAAVFFAAFVV), and 457-472 (VFALLFFFGHLWHGAR).

This sequence belongs to the PsbB/PsbC family. PsbB subfamily. As to quaternary structure, PSII is composed of 1 copy each of membrane proteins PsbA, PsbB, PsbC, PsbD, PsbE, PsbF, PsbH, PsbI, PsbJ, PsbK, PsbL, PsbM, PsbT, PsbX, PsbY, PsbZ, Psb30/Ycf12, peripheral proteins PsbO, CyanoQ (PsbQ), PsbU, PsbV and a large number of cofactors. It forms dimeric complexes. Binds multiple chlorophylls. PSII binds additional chlorophylls, carotenoids and specific lipids. is required as a cofactor.

Its subcellular location is the cellular thylakoid membrane. In terms of biological role, one of the components of the core complex of photosystem II (PSII). It binds chlorophyll and helps catalyze the primary light-induced photochemical processes of PSII. PSII is a light-driven water:plastoquinone oxidoreductase, using light energy to abstract electrons from H(2)O, generating O(2) and a proton gradient subsequently used for ATP formation. This chain is Photosystem II CP47 reaction center protein, found in Nostoc sp. (strain PCC 7120 / SAG 25.82 / UTEX 2576).